The primary structure comprises 404 residues: Cysteine desulfurase IscS (404 aa).

Residues 75 to 76 (AT), asparagine 155, glutamine 183, and 203 to 205 (SAH) contribute to the pyridoxal 5'-phosphate site. The residue at position 206 (lysine 206) is an N6-(pyridoxal phosphate)lysine. Threonine 243 serves as a coordination point for pyridoxal 5'-phosphate. Cysteine 328 functions as the Cysteine persulfide intermediate in the catalytic mechanism. Cysteine 328 contacts [2Fe-2S] cluster.

The protein belongs to the class-V pyridoxal-phosphate-dependent aminotransferase family. NifS/IscS subfamily. Homodimer. Forms a heterotetramer with IscU, interacts with other sulfur acceptors. Requires pyridoxal 5'-phosphate as cofactor.

It is found in the cytoplasm. It catalyses the reaction (sulfur carrier)-H + L-cysteine = (sulfur carrier)-SH + L-alanine. The protein operates within cofactor biosynthesis; iron-sulfur cluster biosynthesis. In terms of biological role, master enzyme that delivers sulfur to a number of partners involved in Fe-S cluster assembly, tRNA modification or cofactor biosynthesis. Catalyzes the removal of elemental sulfur atoms from cysteine to produce alanine. Functions as a sulfur delivery protein for Fe-S cluster synthesis onto IscU, an Fe-S scaffold assembly protein, as well as other S acceptor proteins. In Shewanella woodyi (strain ATCC 51908 / MS32), this protein is Cysteine desulfurase IscS.